A 151-amino-acid polypeptide reads, in one-letter code: Deoxyuridine 5'-triphosphate nucleotidohydrolase (151 aa).

Substrate is bound by residues 70–72 (RSG), N83, 87–89 (LID), and M97.

It belongs to the dUTPase family. It depends on Mg(2+) as a cofactor.

The catalysed reaction is dUTP + H2O = dUMP + diphosphate + H(+). It participates in pyrimidine metabolism; dUMP biosynthesis; dUMP from dCTP (dUTP route): step 2/2. In terms of biological role, this enzyme is involved in nucleotide metabolism: it produces dUMP, the immediate precursor of thymidine nucleotides and it decreases the intracellular concentration of dUTP so that uracil cannot be incorporated into DNA. In Yersinia pseudotuberculosis serotype O:1b (strain IP 31758), this protein is Deoxyuridine 5'-triphosphate nucleotidohydrolase.